The chain runs to 460 residues: tRNA-2-methylthio-N(6)-dimethylallyladenosine synthase (460 aa).

The 116-residue stretch at 23 to 138 (RKVYVHTFGC…LPEMVARAER (116 aa)) folds into the MTTase N-terminal domain. [4Fe-4S] cluster is bound by residues Cys-32, Cys-68, Cys-101, Cys-176, Cys-180, and Cys-183. The region spanning 162–394 (ARGRPTAFVT…QAAQRRIAAA (233 aa)) is the Radical SAM core domain. Residues 397 to 460 (AAELGKVVEV…GGSSLSGTPA (64 aa)) form the TRAM domain.

This sequence belongs to the methylthiotransferase family. MiaB subfamily. In terms of assembly, monomer. The cofactor is [4Fe-4S] cluster.

The protein localises to the cytoplasm. The catalysed reaction is N(6)-dimethylallyladenosine(37) in tRNA + (sulfur carrier)-SH + AH2 + 2 S-adenosyl-L-methionine = 2-methylsulfanyl-N(6)-dimethylallyladenosine(37) in tRNA + (sulfur carrier)-H + 5'-deoxyadenosine + L-methionine + A + S-adenosyl-L-homocysteine + 2 H(+). Functionally, catalyzes the methylthiolation of N6-(dimethylallyl)adenosine (i(6)A), leading to the formation of 2-methylthio-N6-(dimethylallyl)adenosine (ms(2)i(6)A) at position 37 in tRNAs that read codons beginning with uridine. In Anaeromyxobacter sp. (strain Fw109-5), this protein is tRNA-2-methylthio-N(6)-dimethylallyladenosine synthase.